The primary structure comprises 258 residues: Serine protease sp-Eoc49 (258 aa).

The signal sequence occupies residues 1 to 18; it reads MVLIRVLANLLVLQLSYA. Residues 25–249 form the Peptidase S1 domain; it reads VVGGGECNRN…YTDWIQSIIA (225 aa). The N-linked (GlcNAc...) asparagine glycan is linked to Asn-44. Residues Cys-50 and Cys-66 are joined by a disulfide bond. The Charge relay system role is filled by His-65. N-linked (GlcNAc...) asparagine glycans are attached at residues Asn-79 and Asn-103. Asp-110 acts as the Charge relay system in catalysis. Cystine bridges form between Cys-142-Cys-210, Cys-174-Cys-189, and Cys-200-Cys-225. N-linked (GlcNAc...) asparagine glycosylation is present at Asn-154. Ser-204 functions as the Charge relay system in the catalytic mechanism. Asn-251 carries N-linked (GlcNAc...) asparagine glycosylation.

Belongs to the peptidase S1 family. Snake venom subfamily. Monomer. In terms of tissue distribution, expressed by the venom gland.

The protein localises to the secreted. Snake venom serine protease that may act in the hemostasis system of the prey. This is Serine protease sp-Eoc49 from Echis ocellatus (Ocellated saw-scaled viper).